Reading from the N-terminus, the 455-residue chain is Eukaryotic translation initiation factor 3 subunit E (455 aa).

The PCI domain maps to 256-425 (TDLFFSPAYI…GTVIMNHPPQ (170 aa)).

This sequence belongs to the eIF-3 subunit E family. Component of the eukaryotic translation initiation factor 3 (eIF-3) complex.

It localises to the cytoplasm. In terms of biological role, component of the eukaryotic translation initiation factor 3 (eIF-3) complex, which is involved in protein synthesis of a specialized repertoire of mRNAs and, together with other initiation factors, stimulates binding of mRNA and methionyl-tRNAi to the 40S ribosome. The eIF-3 complex specifically targets and initiates translation of a subset of mRNAs involved in cell proliferation. The sequence is that of Eukaryotic translation initiation factor 3 subunit E (int6) from Neosartorya fischeri (strain ATCC 1020 / DSM 3700 / CBS 544.65 / FGSC A1164 / JCM 1740 / NRRL 181 / WB 181) (Aspergillus fischerianus).